Reading from the N-terminus, the 1977-residue chain is Echinoderm microtubule-associated protein-like 5 (1977 aa).

11 WD repeats span residues 59–100 (GHSD…TVSV), 104–145 (VHTH…MLSM), 148–187 (GHTD…LTPK), 195–233 (GDLQ…RTIQ), 235–273 (AHTA…TVID), 280–321 (GYKG…LIMQ), 323–362 (HCEG…LIAR), 364–403 (NMDE…EVVH), 406–445 (DRKE…KKVG), 449–488 (GSLS…EVTS), and 561–601 (GHSA…KLKD). Residues 609-629 (ESLTESNSDESDSDLSDVPEL) form a disordered region. The span at 615-629 (NSDESDSDLSDVPEL) shows a compositional bias: acidic residues. WD repeat units lie at residues 725–766 (GHDD…PLSI), 770–811 (YHQY…KLSV), 814–853 (GSKD…LIGR), 861–900 (GKND…KTVK), 901–940 (AHDG…KTYA), 996–1035 (HMEG…CMLA), 1038–1077 (KLKK…DLVS), 1080–1120 (HRKD…RVGV), and 1236–1276 (AHST…HREK). Disordered regions lie at residues 1274–1299 (REKK…SDVT) and 1323–1363 (PHLQ…NVGK). Residues 1281-1294 (SEESDTDSEEDGGY) are compositionally biased toward acidic residues. The span at 1326–1337 (QQKEPSVDERQG) shows a compositional bias: basic and acidic residues. WD repeat units follow at residues 1420-1471 (EHND…TLSI), 1475-1516 (SHSK…KIAS), 1519-1558 (GHNQ…LLSK), 1568-1606 (ARMQ…RVVA), 1608-1654 (AHNG…RAFR), 1699-1739 (GHVD…MLNK), 1741-1782 (NLGH…GKKR), 1783-1822 (DRRC…TLNR), 1895-1934 (AEKA…KFAK), and 1940-1977 (GHSP…HTPH).

Belongs to the WD repeat EMAP family. As to expression, highly expressed in brain, especially in hippocampus, cerebellum and olfactory bulb (at protein level).

It is found in the cytoplasm. It localises to the cytoskeleton. Functionally, may modify the assembly dynamics of microtubules, such that microtubules are slightly longer, but more dynamic. This Rattus norvegicus (Rat) protein is Echinoderm microtubule-associated protein-like 5 (Eml5).